The following is a 654-amino-acid chain: Tumor necrosis factor alpha-induced protein 2 (654 aa).

Disordered regions lie at residues 1 to 38 (MSEASSEDLVPPLEAGAAPYREEEEAAKKKKEKKKKSK) and 50 to 78 (GKKKKGQPSSAEPEDAAGSRQGLDGPPPT). A compositionally biased stretch (basic residues) spans 28–38 (KKKKEKKKKSK).

This sequence belongs to the SEC6 family.

Its function is as follows. May play a role as a mediator of inflammation and angiogenesis. This Homo sapiens (Human) protein is Tumor necrosis factor alpha-induced protein 2 (TNFAIP2).